Consider the following 375-residue polypeptide: Thioredoxin reductase 1, mitochondrial (375 aa).

Residues 1–37 constitute a mitochondrion transit peptide; it reads MNCVSRLKCLISKARSFARLGGESTLSQPPSLASAAF. FAD is bound by residues 58–61, 79–80, 87–92, Asn-101, Val-134, Cys-192, Asp-337, and 344–346; these read SGPA, FE, IAPGGQ, and RQA. Cys-189 and Cys-192 are disulfide-bonded.

It belongs to the class-II pyridine nucleotide-disulfide oxidoreductase family. Homodimer. The cofactor is FAD. As to expression, ubiquitous.

The protein resides in the cytoplasm. It is found in the mitochondrion. The enzyme catalyses [thioredoxin]-dithiol + NADP(+) = [thioredoxin]-disulfide + NADPH + H(+). NADPH-dependent thioredoxin-disulfide reductase that reduces thioredoxins O1, O2 and F3. This Arabidopsis thaliana (Mouse-ear cress) protein is Thioredoxin reductase 1, mitochondrial (NTR1).